The primary structure comprises 506 residues: tRNA (guanine(6)-N(2))-methyltransferase THUMP3 (506 aa).

The disordered stretch occupies residues 144-172; that stretch reads KTKRRKLNPNSSKQKIDNGRGDTTVEKDV. Over residues 157 to 172 the composition is skewed to basic and acidic residues; that stretch reads QKIDNGRGDTTVEKDV. Positions 170 to 286 constitute a THUMP domain; that stretch reads KDVKKELTNS…DNEVVVGIAL (117 aa).

This sequence belongs to the methyltransferase superfamily. Part of the heterodimeric THUMPD3-TRM112 methyltransferase complex; this complex forms an active tRNA methyltransferase, where TRMT112 acts as an activator of the catalytic subunit THUMPD3.

The protein localises to the cytoplasm. It catalyses the reaction guanosine(6) in tRNA + S-adenosyl-L-methionine = N(2)-methylguanosine(6) in tRNA + S-adenosyl-L-homocysteine + H(+). The catalysed reaction is guanosine(7) in tRNA + S-adenosyl-L-methionine = N(2)-methylguanosine(7) in tRNA + S-adenosyl-L-homocysteine + H(+). In terms of biological role, catalytic subunit of the THUMPD3-TRM112 methyltransferase complex, that specifically mediates the S-adenosyl-L-methionine-dependent N(2)-methylation of guanosine nucleotide at position 6 (m2G6) in tRNAs. This is one of the major tRNA (guanine-N(2))-methyltransferases. Also catalyzes the S-adenosyl-L-methionine-dependent N(2)-methylation of guanosine nucleotide at position 7 of tRNA(Trp). This is tRNA (guanine(6)-N(2))-methyltransferase THUMP3 from Bos taurus (Bovine).